The primary structure comprises 171 residues: LIM domain transcription factor LMO4-A (171 aa).

Residues Met1 to Ser19 are compositionally biased toward polar residues. The segment at Met1 to Pro21 is disordered. LIM zinc-binding domains follow at residues Lys22 to Asn84 and Gly86 to Asn148.

In terms of tissue distribution, at the start of gastrulation (stage 10), expressed in the mesodermal marginal zone. Shortly after (stage 11), expression is down-regulated in the dorsal most region. During neurulation, expressed in the neural plate and ventral epidermis. At late neurula stages, also expressed more rostrally, and then in the brain, migrating neural crests and ventral epidermis.

In terms of biological role, acts as a positive cofactor of GATA transcription factors to establish the identity of the ventral mesoderm during gastrulation. Down-regulation in the dorsal mesoderm is necessary for the proper formation of this territory since, when present, lmo4 may bind ldb1 and restrict the availability of this cofactor for Spemman organizer transcription factors. At neurula stages, suppresses primary neuron differentiation and modulates gene expression at the Isthmic Organizer of the midbrain-hindbrain boundary. This is LIM domain transcription factor LMO4-A (lmo4-a) from Xenopus laevis (African clawed frog).